The primary structure comprises 344 residues: Phenylalanine--tRNA ligase alpha subunit (344 aa).

Glu256 is a binding site for Mg(2+).

It belongs to the class-II aminoacyl-tRNA synthetase family. Phe-tRNA synthetase alpha subunit type 1 subfamily. Tetramer of two alpha and two beta subunits. Requires Mg(2+) as cofactor.

It is found in the cytoplasm. The enzyme catalyses tRNA(Phe) + L-phenylalanine + ATP = L-phenylalanyl-tRNA(Phe) + AMP + diphosphate + H(+). The polypeptide is Phenylalanine--tRNA ligase alpha subunit (Bacillus cytotoxicus (strain DSM 22905 / CIP 110041 / 391-98 / NVH 391-98)).